Consider the following 421-residue polypeptide: N-succinylarginine dihydrolase (421 aa).

Substrate contacts are provided by residues 19–28 (AGLSLGNLAS), N105, and 132–133 (HR). The active site involves E167. A substrate-binding site is contributed by R199. H235 is a catalytic residue. Positions 237 and 346 each coordinate substrate. C352 acts as the Nucleophile in catalysis.

It belongs to the succinylarginine dihydrolase family. In terms of assembly, homodimer.

It carries out the reaction N(2)-succinyl-L-arginine + 2 H2O + 2 H(+) = N(2)-succinyl-L-ornithine + 2 NH4(+) + CO2. Its pathway is amino-acid degradation; L-arginine degradation via AST pathway; L-glutamate and succinate from L-arginine: step 2/5. Catalyzes the hydrolysis of N(2)-succinylarginine into N(2)-succinylornithine, ammonia and CO(2). This Novosphingobium aromaticivorans (strain ATCC 700278 / DSM 12444 / CCUG 56034 / CIP 105152 / NBRC 16084 / F199) protein is N-succinylarginine dihydrolase.